A 380-amino-acid polypeptide reads, in one-letter code: Queuine tRNA-ribosyltransferase (380 aa).

Asp-96 serves as the catalytic Proton acceptor. Residues 96–100, Asp-150, Gln-193, and Gly-220 contribute to the substrate site; that span reads DSGGF. The interval 251–257 is RNA binding; that stretch reads GVGAPDS. The active-site Nucleophile is the Asp-270. An RNA binding; important for wobble base 34 recognition region spans residues 275-279; the sequence is TRIAR. The Zn(2+) site is built by Cys-308, Cys-310, Cys-313, and His-339.

Belongs to the queuine tRNA-ribosyltransferase family. Homodimer. Within each dimer, one monomer is responsible for RNA recognition and catalysis, while the other monomer binds to the replacement base PreQ1. Requires Zn(2+) as cofactor.

It catalyses the reaction 7-aminomethyl-7-carbaguanine + guanosine(34) in tRNA = 7-aminomethyl-7-carbaguanosine(34) in tRNA + guanine. The protein operates within tRNA modification; tRNA-queuosine biosynthesis. Functionally, catalyzes the base-exchange of a guanine (G) residue with the queuine precursor 7-aminomethyl-7-deazaguanine (PreQ1) at position 34 (anticodon wobble position) in tRNAs with GU(N) anticodons (tRNA-Asp, -Asn, -His and -Tyr). Catalysis occurs through a double-displacement mechanism. The nucleophile active site attacks the C1' of nucleotide 34 to detach the guanine base from the RNA, forming a covalent enzyme-RNA intermediate. The proton acceptor active site deprotonates the incoming PreQ1, allowing a nucleophilic attack on the C1' of the ribose to form the product. After dissociation, two additional enzymatic reactions on the tRNA convert PreQ1 to queuine (Q), resulting in the hypermodified nucleoside queuosine (7-(((4,5-cis-dihydroxy-2-cyclopenten-1-yl)amino)methyl)-7-deazaguanosine). The protein is Queuine tRNA-ribosyltransferase of Streptococcus gordonii (strain Challis / ATCC 35105 / BCRC 15272 / CH1 / DL1 / V288).